The primary structure comprises 359 residues: MTTTLQQRSGASSWQAFCEWVTSTNNRLYVGWFGVLMIPTLLAATICFVIAFVAAPPVDIDGIREPVAGSLIYGNNIISGAVVPSSNAIGLHFYPIWEAASLDEWLYNGGPFQLVVFHFLIGIYAYMGREWELSYRLGMRPWICVAYSAPVAAASAVFLVYPFGQGSFSDAMPLGISGTFNYMLVFQAEHNILMHPFHMLGVAGVFGGSLFSAMHGSLVTSSLVRETTESESQNYGYKFGQEEETYNIVAAHGYFGRLIFQYASFNNSRSLHFFLAAWPVVGIWFTALGVSTMAFNLNGFNFNQSILDGQGRVLNTWADVLNRAGLGMEVMHERNAHNFPLDLAAAESTPVALQAPAIG.

3 helical membrane-spanning segments follow: residues 29–46 (YVGW…AATI), 118–133 (HFLI…EWEL), and 142–156 (WICV…AASA). H118 contacts chlorophyll a. Residue Y126 participates in pheophytin a binding. D170 and E189 together coordinate [CaMn4O5] cluster. The helical transmembrane segment at 197–218 (FHMLGVAGVFGGSLFSAMHGSL) threads the bilayer. H198 provides a ligand contact to chlorophyll a. Residues H215 and 264 to 265 (SF) contribute to the a quinone site. Residue H215 coordinates Fe cation. H272 serves as a coordination point for Fe cation. Residues 274-288 (FLAAWPVVGIWFTAL) form a helical membrane-spanning segment. Residues H332, E333, D342, and A344 each coordinate [CaMn4O5] cluster. A propeptide spanning residues 345 to 359 (AAESTPVALQAPAIG) is cleaved from the precursor.

It belongs to the reaction center PufL/M/PsbA/D family. PSII is composed of 1 copy each of membrane proteins PsbA, PsbB, PsbC, PsbD, PsbE, PsbF, PsbH, PsbI, PsbJ, PsbK, PsbL, PsbM, PsbT, PsbX, PsbY, PsbZ, Psb30/Ycf12, peripheral proteins PsbO, CyanoQ (PsbQ), PsbU, PsbV and a large number of cofactors. It forms dimeric complexes. The D1/D2 heterodimer binds P680, chlorophylls that are the primary electron donor of PSII, and subsequent electron acceptors. It shares a non-heme iron and each subunit binds pheophytin, quinone, additional chlorophylls, carotenoids and lipids. D1 provides most of the ligands for the Mn4-Ca-O5 cluster of the oxygen-evolving complex (OEC). There is also a Cl(-1) ion associated with D1 and D2, which is required for oxygen evolution. The PSII complex binds additional chlorophylls, carotenoids and specific lipids. serves as cofactor. Tyr-161 forms a radical intermediate that is referred to as redox-active TyrZ, YZ or Y-Z. In terms of processing, C-terminally processed by CtpA; processing is essential to allow assembly of the oxygen-evolving complex and thus photosynthetic growth.

It is found in the cellular thylakoid membrane. The enzyme catalyses 2 a plastoquinone + 4 hnu + 2 H2O = 2 a plastoquinol + O2. In terms of biological role, photosystem II (PSII) is a light-driven water:plastoquinone oxidoreductase that uses light energy to abstract electrons from H(2)O, generating O(2) and a proton gradient subsequently used for ATP formation. It consists of a core antenna complex that captures photons, and an electron transfer chain that converts photonic excitation into a charge separation. The D1/D2 (PsbA/PsbD) reaction center heterodimer binds P680, the primary electron donor of PSII as well as several subsequent electron acceptors. This Synechococcus sp. (strain CC9605) protein is Photosystem II protein D1 1.